A 289-amino-acid chain; its full sequence is Iron-sulfur cluster carrier protein (289 aa).

Low complexity predominate over residues 1 to 18 (MAEECSGNCDSCGSSSDC). Residues 1 to 20 (MAEECSGNCDSCGSSSDCSD) are disordered. 48 to 55 (GKGGVGKS) is a binding site for ATP.

Belongs to the Mrp/NBP35 ATP-binding proteins family. As to quaternary structure, homodimer.

Its function is as follows. Binds and transfers iron-sulfur (Fe-S) clusters to target apoproteins. Can hydrolyze ATP. This chain is Iron-sulfur cluster carrier protein, found in Methanococcus maripaludis (strain DSM 14266 / JCM 13030 / NBRC 101832 / S2 / LL).